A 396-amino-acid polypeptide reads, in one-letter code: Elongation factor Tu 1 (396 aa).

The tr-type G domain occupies 10-206 (KPHVNVGTIG…ALDSYIPLPE (197 aa)). The segment at 19–26 (GHVDHGKT) is G1. A GTP-binding site is contributed by 19–26 (GHVDHGKT). Residue Thr-26 participates in Mg(2+) binding. The interval 60-64 (GITIN) is G2. Positions 81–84 (DCPG) are G3. Residues 81 to 85 (DCPGH) and 136 to 139 (NKCD) contribute to the GTP site. A G4 region spans residues 136-139 (NKCD). Positions 174-176 (SAK) are G5.

It belongs to the TRAFAC class translation factor GTPase superfamily. Classic translation factor GTPase family. EF-Tu/EF-1A subfamily. As to quaternary structure, monomer.

The protein localises to the cytoplasm. It carries out the reaction GTP + H2O = GDP + phosphate + H(+). GTP hydrolase that promotes the GTP-dependent binding of aminoacyl-tRNA to the A-site of ribosomes during protein biosynthesis. The chain is Elongation factor Tu 1 from Albidiferax ferrireducens (strain ATCC BAA-621 / DSM 15236 / T118) (Rhodoferax ferrireducens).